The primary structure comprises 460 residues: Kynureninase (460 aa).

Pyridoxal 5'-phosphate contacts are provided by residues L116, T117, 144–147, S199, D228, H231, and Y253; that span reads FPSD. An N6-(pyridoxal phosphate)lysine modification is found at K254. 2 residues coordinate pyridoxal 5'-phosphate: W288 and N316.

This sequence belongs to the kynureninase family. In terms of assembly, homodimer. Requires pyridoxal 5'-phosphate as cofactor.

Its subcellular location is the cytoplasm. It carries out the reaction L-kynurenine + H2O = anthranilate + L-alanine + H(+). The enzyme catalyses 3-hydroxy-L-kynurenine + H2O = 3-hydroxyanthranilate + L-alanine + H(+). It participates in amino-acid degradation; L-kynurenine degradation; L-alanine and anthranilate from L-kynurenine: step 1/1. The protein operates within cofactor biosynthesis; NAD(+) biosynthesis; quinolinate from L-kynurenine: step 2/3. Its function is as follows. Catalyzes the cleavage of L-kynurenine (L-Kyn) and L-3-hydroxykynurenine (L-3OHKyn) into anthranilic acid (AA) and 3-hydroxyanthranilic acid (3-OHAA), respectively. This chain is Kynureninase, found in Debaryomyces hansenii (strain ATCC 36239 / CBS 767 / BCRC 21394 / JCM 1990 / NBRC 0083 / IGC 2968) (Yeast).